The sequence spans 90 residues: RNA-binding protein Hfq (90 aa).

Residues 10-70 (DGFLNLLRRE…LSTITPARPL (61 aa)) form the Sm domain.

This sequence belongs to the Hfq family. Homohexamer.

In terms of biological role, RNA chaperone that binds small regulatory RNA (sRNAs) and mRNAs to facilitate mRNA translational regulation in response to envelope stress, environmental stress and changes in metabolite concentrations. Also binds with high specificity to tRNAs. This is RNA-binding protein Hfq from Symbiobacterium thermophilum (strain DSM 24528 / JCM 14929 / IAM 14863 / T).